A 360-amino-acid polypeptide reads, in one-letter code: Biotin synthase 2 (360 aa).

The region spanning 53–280 (RRVKLNFLVN…TAEVRLSGGR (228 aa)) is the Radical SAM core domain. [4Fe-4S] cluster is bound by residues C68, C72, and C75. 4 residues coordinate [2Fe-2S] cluster: C112, C145, C205, and R275.

The protein belongs to the radical SAM superfamily. Biotin synthase family. As to quaternary structure, homodimer. The cofactor is [4Fe-4S] cluster. Requires [2Fe-2S] cluster as cofactor.

The enzyme catalyses (4R,5S)-dethiobiotin + (sulfur carrier)-SH + 2 reduced [2Fe-2S]-[ferredoxin] + 2 S-adenosyl-L-methionine = (sulfur carrier)-H + biotin + 2 5'-deoxyadenosine + 2 L-methionine + 2 oxidized [2Fe-2S]-[ferredoxin]. It functions in the pathway cofactor biosynthesis; biotin biosynthesis; biotin from 7,8-diaminononanoate: step 2/2. Catalyzes the conversion of dethiobiotin (DTB) to biotin by the insertion of a sulfur atom into dethiobiotin via a radical-based mechanism. This Frankia casuarinae (strain DSM 45818 / CECT 9043 / HFP020203 / CcI3) protein is Biotin synthase 2.